A 467-amino-acid chain; its full sequence is Coiled-coil domain-containing protein 174 (467 aa).

Disordered regions lie at residues 40–77 (VFGK…EEQK) and 124–162 (EMEA…SEEW). A coiled-coil region spans residues 63–99 (NRAEKDAEQKIEEQKTLDKAREKLEEKAKLYEKMTKG). Composition is skewed to basic and acidic residues over residues 64–77 (RAEK…EEQK) and 124–139 (EMEA…KAGE). Ser-197 carries the post-translational modification Phosphoserine. A coiled-coil region spans residues 267-309 (LEMLREQTTDQRTKRENIKEKRKAILEARLAKLRQKKMKKSKE). 2 disordered regions span residues 299–363 (LRQK…HIRE) and 378–453 (RQSD…TVTF). The segment covering 324 to 336 (PLPPEPEAVPTPR) has biased composition (pro residues). Composition is skewed to basic and acidic residues over residues 348–363 (VQER…HIRE) and 378–389 (RQSDLRAERDPE). Over residues 425–437 (PDQSHGPSPEHTS) the composition is skewed to polar residues. The segment covering 439 to 448 (TPAPDNPPQA) has biased composition (pro residues).

In terms of tissue distribution, widely expressed.

The protein resides in the nucleus. Probably involved in neuronal development. In Homo sapiens (Human), this protein is Coiled-coil domain-containing protein 174 (CCDC174).